The primary structure comprises 873 residues: Polyribonucleotide nucleotidyltransferase (873 aa).

Mg(2+) contacts are provided by aspartate 521 and aspartate 527. The 60-residue stretch at 587-646 (PRIITTTVPVDKIGEVIGPKGKMINQIQEDTGAEIAIEDDGTVYISSEGGEAAEKAKQII) folds into the KH domain. In terms of domain architecture, S1 motif spans 658-730 (GETYKGTVVK…DRGKISLAIP (73 aa)). Positions 727–873 (LAIPGFENQE…VRRDFDPFDD (147 aa)) are disordered. Residues 742 to 857 (RRSDDRPRRD…EYREGREVRH (116 aa)) are compositionally biased toward basic and acidic residues.

The protein belongs to the polyribonucleotide nucleotidyltransferase family. Mg(2+) serves as cofactor.

The protein resides in the cytoplasm. It catalyses the reaction RNA(n+1) + phosphate = RNA(n) + a ribonucleoside 5'-diphosphate. Functionally, involved in mRNA degradation. Catalyzes the phosphorolysis of single-stranded polyribonucleotides processively in the 3'- to 5'-direction. The polypeptide is Polyribonucleotide nucleotidyltransferase (Bifidobacterium animalis subsp. lactis (strain AD011)).